We begin with the raw amino-acid sequence, 348 residues long: Ferredoxin--NADP reductase (348 aa).

8 residues coordinate FAD: Thr-26, Glu-45, Gln-53, Tyr-58, Ala-98, Phe-133, Asp-299, and Ser-340.

Belongs to the ferredoxin--NADP reductase type 2 family. As to quaternary structure, homodimer. FAD is required as a cofactor.

The catalysed reaction is 2 reduced [2Fe-2S]-[ferredoxin] + NADP(+) + H(+) = 2 oxidized [2Fe-2S]-[ferredoxin] + NADPH. The protein is Ferredoxin--NADP reductase of Prosthecochloris aestuarii (strain DSM 271 / SK 413).